Reading from the N-terminus, the 299-residue chain is Junctional adhesion molecule A (299 aa).

A signal peptide spans 1 to 27 (MGTKAQVERKLLCLFILAILLCSLALG). 2 consecutive Ig-like V-type domains span residues 28 to 125 (SVTV…VKVK) and 135 to 228 (PTVN…NAVR). The Extracellular segment spans residues 28-238 (SVTVHSSEPE…MEAVERNVGV (211 aa)). Cystine bridges form between Cys50–Cys109 and Cys153–Cys212. An N-linked (GlcNAc...) asparagine glycan is attached at Asn185. The helical transmembrane segment at 239-259 (IVAAVLVTLILLGILVFGIWF) threads the bilayer. Residues 260-299 (AYSRGHFDRTKKGTSSKKVIYSQPSARSEGEFKQTSSFLV) lie on the Cytoplasmic side of the membrane. Residues Ser281, Ser284, and Ser287 each carry the phosphoserine modification.

It belongs to the immunoglobulin superfamily. As to quaternary structure, interacts with the ninth PDZ domain of MPDZ. Interacts with the first PDZ domain of PARD3. The association between PARD3 and PARD6B probably disrupts this interaction. Interacts with ITGAL (via I-domain). Interacts with CD151. In terms of assembly, (Microbial infection) Interacts with Mammalian reovirus sigma-1 capsid protein. (Microbial infection) Interacts with Human Rotavirus strain Wa vp4 capsid protein. Post-translationally, N-glycosylated. In terms of processing, (Microbial infection) Cleaved by H.pylori virulence factor PqqE. Cleavage leads to altered tight junction functions. In terms of tissue distribution, expressed in endothelium, epithelium and leukocytes (at protein level).

The protein localises to the cell junction. The protein resides in the tight junction. Its subcellular location is the cell membrane. In terms of biological role, seems to play a role in epithelial tight junction formation. Appears early in primordial forms of cell junctions and recruits PARD3. The association of the PARD6-PARD3 complex may prevent the interaction of PARD3 with JAM1, thereby preventing tight junction assembly. Plays a role in regulating monocyte transmigration involved in integrity of epithelial barrier. Ligand for integrin alpha-L/beta-2 involved in memory T-cell and neutrophil transmigration. Involved in platelet activation. Its function is as follows. (Microbial infection) Acts as a receptor for Mammalian reovirus sigma-1. Functionally, (Microbial infection) Acts as a receptor for Human Rotavirus strain Wa. This chain is Junctional adhesion molecule A (F11R), found in Homo sapiens (Human).